The following is a 510-amino-acid chain: Probable cytosol aminopeptidase (510 aa).

The Mn(2+) site is built by K268 and D273. K280 is an active-site residue. Mn(2+) is bound by residues D291, D350, and E352. The active site involves R354.

Belongs to the peptidase M17 family. The cofactor is Mn(2+).

It is found in the cytoplasm. The enzyme catalyses Release of an N-terminal amino acid, Xaa-|-Yaa-, in which Xaa is preferably Leu, but may be other amino acids including Pro although not Arg or Lys, and Yaa may be Pro. Amino acid amides and methyl esters are also readily hydrolyzed, but rates on arylamides are exceedingly low.. It catalyses the reaction Release of an N-terminal amino acid, preferentially leucine, but not glutamic or aspartic acids.. Functionally, presumably involved in the processing and regular turnover of intracellular proteins. Catalyzes the removal of unsubstituted N-terminal amino acids from various peptides. The sequence is that of Probable cytosol aminopeptidase from Micrococcus luteus (strain ATCC 4698 / DSM 20030 / JCM 1464 / CCM 169 / CCUG 5858 / IAM 1056 / NBRC 3333 / NCIMB 9278 / NCTC 2665 / VKM Ac-2230) (Micrococcus lysodeikticus).